The sequence spans 313 residues: tRNA dimethylallyltransferase (313 aa).

12-19 (GPTASGKS) contacts ATP. 14–19 (TASGKS) is a binding site for substrate. 2 interaction with substrate tRNA regions span residues 37 to 40 (DSMQ) and 161 to 165 (QRSIR).

It belongs to the IPP transferase family. In terms of assembly, monomer. It depends on Mg(2+) as a cofactor.

It catalyses the reaction adenosine(37) in tRNA + dimethylallyl diphosphate = N(6)-dimethylallyladenosine(37) in tRNA + diphosphate. In terms of biological role, catalyzes the transfer of a dimethylallyl group onto the adenine at position 37 in tRNAs that read codons beginning with uridine, leading to the formation of N6-(dimethylallyl)adenosine (i(6)A). The sequence is that of tRNA dimethylallyltransferase from Pelagibacter ubique (strain HTCC1062).